The chain runs to 354 residues: Heme A synthase (354 aa).

A run of 8 helical transmembrane segments spans residues 21–41, 106–126, 139–159, 171–191, 212–232, 268–288, 304–324, and 326–346; these read VAVW…LGGL, VWGR…ALSG, VFLL…SGLV, AHLA…LDIL, MLGL…VAGL, VQFG…VGWF, AVGL…VMVV, and VWLA…CLWA. His-272 is a binding site for heme. A heme-binding site is contributed by His-332.

It belongs to the COX15/CtaA family. Type 2 subfamily. As to quaternary structure, interacts with CtaB. Heme b is required as a cofactor.

The protein resides in the cell membrane. The catalysed reaction is Fe(II)-heme o + 2 A + H2O = Fe(II)-heme a + 2 AH2. It participates in porphyrin-containing compound metabolism; heme A biosynthesis; heme A from heme O: step 1/1. Functionally, catalyzes the conversion of heme O to heme A by two successive hydroxylations of the methyl group at C8. The first hydroxylation forms heme I, the second hydroxylation results in an unstable dihydroxymethyl group, which spontaneously dehydrates, resulting in the formyl group of heme A. The protein is Heme A synthase of Paramagnetospirillum magneticum (strain ATCC 700264 / AMB-1) (Magnetospirillum magneticum).